Consider the following 475-residue polypeptide: Ribulose bisphosphate carboxylase large chain (475 aa).

The propeptide occupies 1–2 (MV). Proline 3 is modified (N-acetylproline). Lysine 14 carries the N6,N6,N6-trimethyllysine modification. 2 residues coordinate substrate: asparagine 123 and threonine 173. The Proton acceptor role is filled by lysine 175. Residue lysine 177 coordinates substrate. Residues lysine 201, aspartate 203, and glutamate 204 each coordinate Mg(2+). The residue at position 201 (lysine 201) is an N6-carboxylysine. Residue histidine 294 is the Proton acceptor of the active site. Substrate is bound by residues arginine 295, histidine 327, and serine 379.

Belongs to the RuBisCO large chain family. Type I subfamily. As to quaternary structure, heterohexadecamer of 8 large chains and 8 small chains. Mg(2+) is required as a cofactor.

The protein localises to the plastid. It is found in the chloroplast. The catalysed reaction is 2 (2R)-3-phosphoglycerate + 2 H(+) = D-ribulose 1,5-bisphosphate + CO2 + H2O. The enzyme catalyses D-ribulose 1,5-bisphosphate + O2 = 2-phosphoglycolate + (2R)-3-phosphoglycerate + 2 H(+). Functionally, ruBisCO catalyzes two reactions: the carboxylation of D-ribulose 1,5-bisphosphate, the primary event in carbon dioxide fixation, as well as the oxidative fragmentation of the pentose substrate in the photorespiration process. Both reactions occur simultaneously and in competition at the same active site. The protein is Ribulose bisphosphate carboxylase large chain of Stigeoclonium helveticum (Green alga).